The primary structure comprises 121 residues: Thioredoxin-like protein (121 aa).

Positions 2-112 (VHHITSNDEL…LGAAAEKLGG (111 aa)) constitute a Thioredoxin domain. Cysteine 30 and cysteine 33 are oxidised to a cystine.

This sequence belongs to the thioredoxin family.

Participates in various redox reactions through the reversible oxidation of its active center dithiol to a disulfide and catalyzes dithiol-disulfide exchange reactions. The polypeptide is Thioredoxin-like protein (Fusarium culmorum).